The sequence spans 490 residues: Ribulose bisphosphate carboxylase large chain (490 aa).

Residues N127 and T177 each contribute to the substrate site. The active-site Proton acceptor is the K179. K181 provides a ligand contact to substrate. Residues K205, D207, and E208 each coordinate Mg(2+). The residue at position 205 (K205) is an N6-carboxylysine. Residue H297 is the Proton acceptor of the active site. Substrate is bound by residues R298, H330, and S382.

Belongs to the RuBisCO large chain family. Type I subfamily. In terms of assembly, heterohexadecamer of 8 large chains and 8 small chains. Mg(2+) serves as cofactor.

The protein resides in the plastid. The protein localises to the chloroplast. It carries out the reaction 2 (2R)-3-phosphoglycerate + 2 H(+) = D-ribulose 1,5-bisphosphate + CO2 + H2O. It catalyses the reaction D-ribulose 1,5-bisphosphate + O2 = 2-phosphoglycolate + (2R)-3-phosphoglycerate + 2 H(+). Functionally, ruBisCO catalyzes two reactions: the carboxylation of D-ribulose 1,5-bisphosphate, the primary event in carbon dioxide fixation, as well as the oxidative fragmentation of the pentose substrate in the photorespiration process. Both reactions occur simultaneously and in competition at the same active site. The chain is Ribulose bisphosphate carboxylase large chain from Detonula confervacea (Marine diatom).